Consider the following 273-residue polypeptide: Undecaprenyl-diphosphatase (273 aa).

The next 7 membrane-spanning stretches (helical) occupy residues 4–24 (LILIKAFLLGIVEGLTEFLPI), 43–63 (KAQVFTVAIQLGAILSVCWEY), 82–102 (FVLNLCVAFLPAAILGLLFIK), 108–128 (LFHPLPVAIALVTGGVLILWA), 183–203 (AAEFSFFLAIPIMFAATFYDV), 217–237 (MFVVGSIAAFISALIAIRGFI), and 253–273 (IGFGLIVLLTAHFGLINWSAG).

It belongs to the UppP family.

Its subcellular location is the cell inner membrane. It carries out the reaction di-trans,octa-cis-undecaprenyl diphosphate + H2O = di-trans,octa-cis-undecaprenyl phosphate + phosphate + H(+). Functionally, catalyzes the dephosphorylation of undecaprenyl diphosphate (UPP). Confers resistance to bacitracin. This Nitrosomonas eutropha (strain DSM 101675 / C91 / Nm57) protein is Undecaprenyl-diphosphatase.